The primary structure comprises 674 residues: Carbon monoxide dehydrogenase/acetyl-CoA synthase subunit beta (674 aa).

Residues 1–25 (MPRFRDLSHNCRPSEAPRVMEPKNR) are disordered. Residues Cys59, Cys67, Cys68, Cys71, Cys76, and Cys90 each coordinate [4Fe-4S] cluster. [Ni-4Fe-4S] cluster is bound by residues His283, Cys317, Cys355, Cys470, Cys500, and Cys550.

As to quaternary structure, tetramer of two alpha and two beta chains. [Ni-Fe-S] cluster serves as cofactor. The cofactor is [4Fe-4S] cluster.

The enzyme catalyses CO + 2 oxidized [2Fe-2S]-[ferredoxin] + H2O = 2 reduced [2Fe-2S]-[ferredoxin] + CO2 + 2 H(+). Its function is as follows. The beta subunit (this protein) generates CO from CO(2), while the alpha subunit combines the CO with CoA and a methyl group to form acetyl-CoA. The methyl group, which is incorporated into acetyl-CoA, is transferred to the alpha subunit by a corrinoid iron-sulfur protein. In Moorella thermoacetica (Clostridium thermoaceticum), this protein is Carbon monoxide dehydrogenase/acetyl-CoA synthase subunit beta.